The chain runs to 198 residues: Thymidine kinase (198 aa).

ATP contacts are provided by residues 16–23 and 89–92; these read GGMYSGKS and EEGQ. The active-site Proton acceptor is Glu-90. Zn(2+) contacts are provided by Cys-146, Cys-149, Cys-184, and Cys-187.

The protein belongs to the thymidine kinase family. Homotetramer.

It localises to the cytoplasm. It carries out the reaction thymidine + ATP = dTMP + ADP + H(+). The polypeptide is Thymidine kinase (Dictyoglomus thermophilum (strain ATCC 35947 / DSM 3960 / H-6-12)).